The chain runs to 351 residues: Dihydroorotate dehydrogenase (quinone) (351 aa).

FMN contacts are provided by residues 61–65 (AGLDK) and T85. K65 contacts substrate. 110–114 (NRMGF) lines the substrate pocket. FMN contacts are provided by N139 and N172. A substrate-binding site is contributed by N172. S175 (nucleophile) is an active-site residue. N177 is a substrate binding site. 2 residues coordinate FMN: K217 and T245. 246-247 (NT) contacts substrate. FMN contacts are provided by residues G268, G297, and 318-319 (YS).

This sequence belongs to the dihydroorotate dehydrogenase family. Type 2 subfamily. Monomer. It depends on FMN as a cofactor.

The protein resides in the cell membrane. It carries out the reaction (S)-dihydroorotate + a quinone = orotate + a quinol. The protein operates within pyrimidine metabolism; UMP biosynthesis via de novo pathway; orotate from (S)-dihydroorotate (quinone route): step 1/1. In terms of biological role, catalyzes the conversion of dihydroorotate to orotate with quinone as electron acceptor. This chain is Dihydroorotate dehydrogenase (quinone), found in Xanthomonas oryzae pv. oryzae (strain PXO99A).